A 455-amino-acid polypeptide reads, in one-letter code: Argininosuccinate lyase (455 aa).

It belongs to the lyase 1 family. Argininosuccinate lyase subfamily.

The protein resides in the cytoplasm. The enzyme catalyses 2-(N(omega)-L-arginino)succinate = fumarate + L-arginine. It participates in amino-acid biosynthesis; L-arginine biosynthesis; L-arginine from L-ornithine and carbamoyl phosphate: step 3/3. In Caulobacter sp. (strain K31), this protein is Argininosuccinate lyase.